We begin with the raw amino-acid sequence, 402 residues long: NADH-quinone oxidoreductase subunit D (402 aa).

This sequence belongs to the complex I 49 kDa subunit family. NDH-1 is composed of 14 different subunits. Subunits NuoB, C, D, E, F, and G constitute the peripheral sector of the complex.

It is found in the cell inner membrane. It carries out the reaction a quinone + NADH + 5 H(+)(in) = a quinol + NAD(+) + 4 H(+)(out). NDH-1 shuttles electrons from NADH, via FMN and iron-sulfur (Fe-S) centers, to quinones in the respiratory chain. The immediate electron acceptor for the enzyme in this species is believed to be ubiquinone. Couples the redox reaction to proton translocation (for every two electrons transferred, four hydrogen ions are translocated across the cytoplasmic membrane), and thus conserves the redox energy in a proton gradient. This Azorhizobium caulinodans (strain ATCC 43989 / DSM 5975 / JCM 20966 / LMG 6465 / NBRC 14845 / NCIMB 13405 / ORS 571) protein is NADH-quinone oxidoreductase subunit D.